A 179-amino-acid chain; its full sequence is Large ribosomal subunit protein uL5 (179 aa).

This sequence belongs to the universal ribosomal protein uL5 family. As to quaternary structure, part of the 50S ribosomal subunit; part of the 5S rRNA/L5/L18/L25 subcomplex. Contacts the 5S rRNA and the P site tRNA. Forms a bridge to the 30S subunit in the 70S ribosome.

Functionally, this is one of the proteins that bind and probably mediate the attachment of the 5S RNA into the large ribosomal subunit, where it forms part of the central protuberance. In the 70S ribosome it contacts protein S13 of the 30S subunit (bridge B1b), connecting the 2 subunits; this bridge is implicated in subunit movement. Contacts the P site tRNA; the 5S rRNA and some of its associated proteins might help stabilize positioning of ribosome-bound tRNAs. This chain is Large ribosomal subunit protein uL5, found in Prochlorococcus marinus (strain MIT 9215).